A 126-amino-acid chain; its full sequence is 3-isopropylmalate dehydrogenase (126 aa).

Residues D14 and D18 each coordinate Mg(2+). Residue 48 to 60 participates in NAD(+) binding; sequence GSAPDIAGKNIAN.

This sequence belongs to the isocitrate and isopropylmalate dehydrogenases family. LeuB type 1 subfamily. In terms of assembly, homodimer. Requires Mg(2+) as cofactor. Mn(2+) serves as cofactor.

The protein resides in the cytoplasm. The enzyme catalyses (2R,3S)-3-isopropylmalate + NAD(+) = 4-methyl-2-oxopentanoate + CO2 + NADH. It participates in amino-acid biosynthesis; L-leucine biosynthesis; L-leucine from 3-methyl-2-oxobutanoate: step 3/4. In terms of biological role, catalyzes the oxidation of 3-carboxy-2-hydroxy-4-methylpentanoate (3-isopropylmalate) to 3-carboxy-4-methyl-2-oxopentanoate. The product decarboxylates to 4-methyl-2 oxopentanoate. The protein is 3-isopropylmalate dehydrogenase (leuB) of Buchnera aphidicola subsp. Uroleucon rurale.